A 674-amino-acid chain; its full sequence is Nucleoporin NDC1 (674 aa).

The Cytoplasmic portion of the chain corresponds to 1–24 (MATAVSRPCAGRSRDILWRVLGWR). The chain crosses the membrane as a helical span at residues 25-45 (IVASIVWSVLFLPICTTVFII). Over 46–68 (FSRIDLFHPIQWLSDSFSDLYSS) the chain is Perinuclear space. A helical membrane pass occupies residues 69-89 (YVIFYFLLLSVVIIIISIFNV). Over 90-114 (EFYAVVPSIPCSRLALIGKIIHPQQ) the chain is Cytoplasmic. Residues 115 to 135 (LMHSFIHAAMGMVMAWCAAVI) form a helical membrane-spanning segment. Residues 136–165 (TQGQYSFLVVPCTGTNSFGSPAAQTCLNEY) lie on the Perinuclear space side of the membrane. A helical membrane pass occupies residues 166–186 (HLFFLLTGAFMGYSYSLLYFV). The Cytoplasmic segment spans residues 187–225 (NNMNYLPFPIIQQYKFLRFRRSLLLLVKHSCVESLFLVR). The chain crosses the membrane as a helical span at residues 226–246 (NFCILYYFLGYIPKAWISTAM). Over 247 to 272 (NLHIDEQVHRPLDTVSGLLNLSLLYH) the chain is Perinuclear space. The chain crosses the membrane as a helical span at residues 273–293 (VWLCGVFLLTTWYVSWILFKI). Over 294 to 674 (YATEAHVFPV…RLQQFLEFKE (381 aa)) the chain is Cytoplasmic. Residues 394-425 (SSSYPVEPKKLNSPEETAFQTPKSSQMPRPSV) form a disordered region. Serine 406 is modified (phosphoserine). A compositionally biased stretch (polar residues) spans 407–421 (PEETAFQTPKSSQMP). Threonine 414 bears the Phosphothreonine mark. At serine 439 the chain carries Phosphoserine. Threonine 440 is modified (phosphothreonine). At serine 445 the chain carries Phosphoserine. Phosphothreonine is present on threonine 449. Phosphoserine occurs at positions 471 and 474.

It belongs to the NDC1 family. In terms of assembly, interacts with the NUP35/NUP53. Interacts with AAAS, anchoring it to the nuclear envelope.

The protein resides in the nucleus. Its subcellular location is the nuclear pore complex. The protein localises to the nucleus membrane. In terms of biological role, component of the nuclear pore complex (NPC), which plays a key role in de novo assembly and insertion of NPC in the nuclear envelope. Required for NPC and nuclear envelope assembly, possibly by forming a link between the nuclear envelope membrane and soluble nucleoporins, thereby anchoring the NPC in the membrane. The chain is Nucleoporin NDC1 (NDC1) from Homo sapiens (Human).